The chain runs to 246 residues: 14-3-3 protein beta/alpha (246 aa).

Met-1 is subject to N-acetylmethionine; in 14-3-3 protein beta/alpha; alternate. Residue Met-1 is modified to N-acetylmethionine. At Thr-2 the chain carries N-acetylthreonine; in 14-3-3 protein beta/alpha, N-terminally processed. At Thr-2 the chain carries Phosphothreonine. At Lys-5 the chain carries N6-acetyllysine. The residue at position 51 (Lys-51) is an N6-acetyllysine; alternate. Residue Lys-51 forms a Glycyl lysine isopeptide (Lys-Gly) (interchain with G-Cter in SUMO2); alternate linkage. At Ser-60 the chain carries Phosphoserine. Lys-70 is subject to N6-acetyllysine. Residues Tyr-84 and Tyr-106 each carry the 3'-nitrotyrosine modification. Lys-117 is subject to N6-acetyllysine. A phosphoserine mark is found at Ser-186 and Ser-232.

The protein belongs to the 14-3-3 family. In terms of assembly, homodimer. Interacts with SAMSN1 and PRKCE. Interacts with AKAP13. Interacts with SSH1 and TORC2/CRTC2. Interacts with ABL1; the interaction results in cytoplasmic location of ABL1 and inhibition of cABL-mediated apoptosis. Interacts with ROR2 (dimer); the interaction results in phosphorylation of YWHAB on tyrosine residues. Interacts with GAB2. Interacts with YAP1 (phosphorylated form). Interacts with the phosphorylated (by AKT1) form of SRPK2. Interacts with PKA-phosphorylated AANAT. Interacts with MYO1C. Interacts with SIRT2. Interacts with the 'Thr-369' phosphorylated form of DAPK2. Interacts with PI4KB, TBC1D22A and TBC1D22B. Interacts with the 'Ser-1134' and 'Ser-1161' phosphorylated form of SOS1. Interacts (via phosphorylated form) with YWHAB; this interaction occurs in a protein kinase AKT1-dependent manner. Interacts with SLITRK1. Interacts with SYNPO2 (phosphorylated form); YWHAB competes with ACTN2 for interaction with SYNPO2. Interacts with RIPOR2 (via phosphorylated form) isoform 2; this interaction occurs in a chemokine-dependent manner and does not compete for binding of RIPOR2 with RHOA nor blocks inhibition of RIPOR2-mediated RHOA activity. Interacts with MARK2 and MARK3. Interacts with TESK1; the interaction is dependent on the phosphorylation of TESK1 'Ser-437' and inhibits TESK1 kinase activity. Interacts with MEFV. Interacts with HDAC4. Interacts with ADAM22 (via C-terminus). As to quaternary structure, (Microbial infection) Interacts with herpes simplex virus 1 protein UL46. (Microbial infection) Probably interacts with Chlamydia trachomatis protein IncG. The alpha, brain-specific form differs from the beta form in being phosphorylated. Phosphorylated on Ser-60 by protein kinase C delta type catalytic subunit in a sphingosine-dependent fashion.

The protein localises to the cytoplasm. The protein resides in the melanosome. It localises to the vacuole membrane. Functionally, adapter protein implicated in the regulation of a large spectrum of both general and specialized signaling pathways. Binds to a large number of partners, usually by recognition of a phosphoserine or phosphothreonine motif. Binding generally results in the modulation of the activity of the binding partner. Negative regulator of osteogenesis. Blocks the nuclear translocation of the phosphorylated form (by AKT1) of SRPK2 and antagonizes its stimulatory effect on cyclin D1 expression resulting in blockage of neuronal apoptosis elicited by SRPK2. Negative regulator of signaling cascades that mediate activation of MAP kinases via AKAP13. This chain is 14-3-3 protein beta/alpha (YWHAB), found in Homo sapiens (Human).